Here is a 317-residue protein sequence, read N- to C-terminus: Retinol dehydrogenase 16 (317 aa).

33–57 (FITGCDSGFGKLLARQLDARGLRVL) contributes to the NAD(+) binding site. Ser164 is a binding site for substrate. Tyr176 serves as the catalytic Proton acceptor. The chain crosses the membrane as a helical span at residues 289-309 (LLYLPMSYMPTFLVDAIMYWV).

Belongs to the short-chain dehydrogenases/reductases (SDR) family. In terms of assembly, homodimer. Not N-glycosylated. In terms of tissue distribution, highly expressed in adult liver (at protein level). Detected in endometrium, liver and foreskin. Detected in the spineous layers of adult skin, and at lower levels in basal and granular skin layers. Detected in fetal liver and lung.

Its subcellular location is the microsome membrane. The protein resides in the endoplasmic reticulum membrane. It catalyses the reaction all-trans-retinol--[retinol-binding protein] + NAD(+) = all-trans-retinal--[retinol-binding protein] + NADH + H(+). It carries out the reaction all-trans-retinol + NAD(+) = all-trans-retinal + NADH + H(+). The catalysed reaction is 13-cis-retinol + NAD(+) = 13-cis-retinal + NADH + H(+). The enzyme catalyses 11-cis-retinol + NAD(+) = 11-cis-retinal + NADH + H(+). It catalyses the reaction 9-cis-retinol + NAD(+) = 9-cis-retinal + NADH + H(+). It carries out the reaction 5alpha-androstane-3alpha,17beta-diol + NAD(+) = 17beta-hydroxy-5alpha-androstan-3-one + NADH + H(+). The catalysed reaction is androsterone + NAD(+) = 5alpha-androstan-3,17-dione + NADH + H(+). It functions in the pathway cofactor metabolism; retinol metabolism. Its activity is regulated as follows. Inhibited by citral, perillyl alcohol, geraniol, farnesol and geranyl geraniol. Functionally, oxidoreductase with a preference for NAD. Oxidizes all-trans-retinol, 9-cis-retinol, 11-cis-retinol and 13-cis-retinol to the corresponding aldehydes. Has higher activity towards CRBP-bound retinol than with free retinol. Also oxidizes 3-alpha-hydroxysteroids. Oxidizes androstanediol and androsterone to dihydrotestosterone and androstanedione. Can also catalyze the reverse reaction. The protein is Retinol dehydrogenase 16 of Homo sapiens (Human).